A 116-amino-acid polypeptide reads, in one-letter code: Large ribosomal subunit protein eL22B (116 aa).

Belongs to the eukaryotic ribosomal protein eL22 family.

The polypeptide is Large ribosomal subunit protein eL22B (rpl22a) (Dictyostelium discoideum (Social amoeba)).